The chain runs to 504 residues: Paired zinc finger protein 1 (504 aa).

2 consecutive C2H2-type zinc fingers follow at residues 12–35 (LLCGICGKYFSDDESLREHRRQRH) and 39–62 (HMCLLCNRRIPENETLREHMKNKH). Residues 68–91 (FICVCCNWSFGTEIYLKCHEECMK) form a C2H2-type 3; degenerate zinc finger. Disordered regions lie at residues 115–136 (ALNTDPQNGSDDVPHSSPSPVP) and 154–173 (IESADRSSASTSTPRTLVSG). The span at 159–172 (RSSASTSTPRTLVS) shows a compositional bias: polar residues. 2 consecutive C2H2-type zinc fingers follow at residues 179-202 (IPCGFCGKDFFHEGSLREHRRRFH) and 206-229 (HTCLLCNRQIPENETVRDHMKSQH). The segment at 235 to 258 (YNCLCCNWTFLNQVHLISHKTCLK) adopts a C2H2-type 6; degenerate zinc-finger fold. The C2H2-type 7 zinc finger occupies 309–332 (LSCKSCGKFFYSERSLSKHHRQIH). A C2H2-type 8; degenerate zinc finger spans residues 365–389 (FNCRCCNWSFATRRCLMSHVECLKK).

Expressed in proximal gonad.

Possible transcriptional regulator. Involved in promoting segregation of chromosomes during meiosis, perhaps acting downstream of the let-60 RAS / mpk-1 MAPK signaling pathway. This is Paired zinc finger protein 1 from Caenorhabditis elegans.